Reading from the N-terminus, the 231-residue chain is Aquaporin Z (231 aa).

A run of 2 helical transmembrane segments spans residues 11–31 (FLGT…AAAF) and 36–56 (IGLL…AFAI). An NPA 1 motif is present at residues 65–67 (NPA). Helical transmembrane passes span 84 to 104 (LPYI…LYLI), 132 to 152 (MISV…VILG), and 161 to 181 (GFAP…SIPI). The short motif at 187–189 (NPA) is the NPA 2 element. Residues 203–223 (VSQLWLFWAAPIIGAILAGVI) traverse the membrane as a helical segment.

The protein belongs to the MIP/aquaporin (TC 1.A.8) family. As to quaternary structure, homotetramer.

It is found in the cell inner membrane. The catalysed reaction is H2O(in) = H2O(out). Functionally, channel that permits osmotically driven movement of water in both directions. It is involved in the osmoregulation and in the maintenance of cell turgor during volume expansion in rapidly growing cells. It mediates rapid entry or exit of water in response to abrupt changes in osmolarity. In Shewanella oneidensis (strain ATCC 700550 / JCM 31522 / CIP 106686 / LMG 19005 / NCIMB 14063 / MR-1), this protein is Aquaporin Z.